A 128-amino-acid chain; its full sequence is Glycine cleavage system H protein (128 aa).

The Lipoyl-binding domain maps to 23-105; that stretch reads IGIVGITWFA…YGEGWILKLE (83 aa). K64 carries the post-translational modification N6-lipoyllysine.

This sequence belongs to the GcvH family. The glycine cleavage system is composed of four proteins: P, T, L and H. Requires (R)-lipoate as cofactor.

Its function is as follows. The glycine cleavage system catalyzes the degradation of glycine. The H protein shuttles the methylamine group of glycine from the P protein to the T protein. This Symbiobacterium thermophilum (strain DSM 24528 / JCM 14929 / IAM 14863 / T) protein is Glycine cleavage system H protein.